Here is an 85-residue protein sequence, read N- to C-terminus: Large ribosomal subunit protein bL27 (85 aa).

A disordered region spans residues 1–20; it reads MAHKKAGGSTRNGRDSESKR.

It belongs to the bacterial ribosomal protein bL27 family.

This is Large ribosomal subunit protein bL27 from Yersinia pseudotuberculosis serotype O:1b (strain IP 31758).